Consider the following 288-residue polypeptide: MSAVIIDGKAVAARVRADVARDVAEFRAATGRQPGLATVLVGDDPASAVYIGGKRRSCVEAGMADLHQHLPADTPQDEIAALLDSLAADPAVSGILLQLPVPEGLDGAALVGRIPPEKDVDGLTTASVGLLARGLPGLRPCTPSGIIELLDAYDVELSGAPTVVVGRSELVGRPVAQLLVGRNATVTICHSRTRDLAAVCRGADVLVVAAGKQAIIGADAVKPGATVIDVGMHRTEQGLRGDVDFDAVREVAGRLTPVPGGVGPMTIAMLLRNTLLAARAAAEVGSLV.

NADP(+) contacts are provided by residues 166-168 (GRS) and serine 191.

It belongs to the tetrahydrofolate dehydrogenase/cyclohydrolase family. Homodimer.

The catalysed reaction is (6R)-5,10-methylene-5,6,7,8-tetrahydrofolate + NADP(+) = (6R)-5,10-methenyltetrahydrofolate + NADPH. It catalyses the reaction (6R)-5,10-methenyltetrahydrofolate + H2O = (6R)-10-formyltetrahydrofolate + H(+). It functions in the pathway one-carbon metabolism; tetrahydrofolate interconversion. Functionally, catalyzes the oxidation of 5,10-methylenetetrahydrofolate to 5,10-methenyltetrahydrofolate and then the hydrolysis of 5,10-methenyltetrahydrofolate to 10-formyltetrahydrofolate. This Frankia alni (strain DSM 45986 / CECT 9034 / ACN14a) protein is Bifunctional protein FolD 2.